Here is a 471-residue protein sequence, read N- to C-terminus: MEPEISDTKVTARFTTRDENLHLPDQDRTLLISTNLKRVNLSKILNELLGREDDRIPFDILINGQFLRTTVDEYLTKNGINAETRLEVEYTRALVPPLNVTSFEHDDWVSAVDVLSQTSRAGAWSGGSVQSGQERILSASYDGLVRVWNTSGDVLATSEAPNNGGRITSLKSAKWLSDKKIVAAGMDNTVRVFKYDEDTRTITTSLELFSHRWGVEDVAVHGPSSRILSASSDNTISLFSSNAKENPVAPSSLLPNSTAASNKRQKLSKPDRTVPARGALTTFTGHSSPVSSVIFKPDDATVAYSASHDHTLKTWDLPTAQCVDTRTTGHSLLSLCAIPSRNLIATGTSARHITLIDPRVSATQISVMTLRGHKNGVVSLDTDPSSDHGLVSGSHDGTVQIWDLRNVTTGGQVGEGQQGESVHTIHRQGQSGPGKGHGEGVKVFGVRWDKDVGIVSGGEDKKIQINRALGS.

The ubiquitin-like (UBL) domain stretch occupies residues 10–92; it reads VTARFTTRDE…ETRLEVEYTR (83 aa). WD repeat units lie at residues 119-158, 165-203, and 210-249; these read SRAG…LATS, GRIT…RTIT, and SHRW…NPVA. The disordered stretch occupies residues 245–274; sequence ENPVAPSSLLPNSTAASNKRQKLSKPDRTV. Polar residues predominate over residues 253 to 262; that stretch reads LLPNSTAASN. 4 WD repeats span residues 285-325, 327-366, 372-412, and 436-471; these read GHSS…CVDT, TTGH…TQIS, GHKN…TGGQ, and GHGE…ALGS. The segment at 412–440 is disordered; the sequence is QVGEGQQGESVHTIHRQGQSGPGKGHGEG.

This sequence belongs to the WD repeat WDR12/YTM1 family. Component of the NOP7 complex, composed of ERB1, NOP7 and YTM1. The complex is held together by ERB1, which interacts with NOP7 via its N-terminal domain and with YTM1 via a high-affinity interaction between the seven-bladed beta-propeller domains of the 2 proteins. The NOP7 complex associates with the 66S pre-ribosome. Interacts (via UBL domain) with MDN1 (via VWFA/MIDAS domain).

The protein resides in the nucleus. Its subcellular location is the nucleolus. It is found in the nucleoplasm. Its function is as follows. Component of the NOP7 complex, which is required for maturation of the 25S and 5.8S ribosomal RNAs and formation of the 60S ribosome. In Phaeosphaeria nodorum (strain SN15 / ATCC MYA-4574 / FGSC 10173) (Glume blotch fungus), this protein is Ribosome biogenesis protein YTM1.